The chain runs to 389 residues: Methylthioribose kinase (389 aa).

Residues Asn37, Lys52, and 106–108 (EDL) contribute to the ATP site. Residue Asp224 participates in substrate binding. 241–243 (DPE) contacts ATP. Position 331 (Arg331) interacts with substrate.

This sequence belongs to the methylthioribose kinase family. In terms of assembly, homodimer.

The enzyme catalyses 5-(methylsulfanyl)-D-ribose + ATP = 5-(methylsulfanyl)-alpha-D-ribose 1-phosphate + ADP + H(+). The protein operates within amino-acid biosynthesis; L-methionine biosynthesis via salvage pathway; S-methyl-5-thio-alpha-D-ribose 1-phosphate from S-methyl-5'-thioadenosine (hydrolase route): step 2/2. In terms of biological role, catalyzes the phosphorylation of methylthioribose into methylthioribose-1-phosphate. The polypeptide is Methylthioribose kinase (Exiguobacterium sibiricum (strain DSM 17290 / CCUG 55495 / CIP 109462 / JCM 13490 / 255-15)).